A 334-amino-acid chain; its full sequence is Probable aminoacyl tRNA synthase complex-interacting multifunctional protein 2 (334 aa).

In terms of domain architecture, GST C-terminal spans 280–327 (LDKRLQKQQYFGGSQMSVADVGVYSSLIRMPAVTEKDLTPALVAWRKR).

Component of the aminoacyl-tRNA synthase complex which is comprised of a bifunctional glutamyl-prolyl-tRNA synthase, the monospecific isoleucyl, leucyl, glutaminyl, methionyl, lysyl, arginyl and aspartyl-tRNA synthases, and three auxiliary proteins.

It localises to the cytoplasm. It is found in the cytosol. Its subcellular location is the nucleus. Functionally, required for assembly and stability of the aminoacyl-tRNA synthase complex. The polypeptide is Probable aminoacyl tRNA synthase complex-interacting multifunctional protein 2 (Drosophila melanogaster (Fruit fly)).